A 110-amino-acid polypeptide reads, in one-letter code: Insulin-2 (110 aa).

An N-terminal signal peptide occupies residues 1–24 (MALWIRFLPLLALLILWEPRPAQA). Intrachain disulfides connect cysteine 31–cysteine 96, cysteine 43–cysteine 109, and cysteine 95–cysteine 100. Positions 57–87 (EVEDPQVAQLELGGGPGAGDLQTLALEVARQ) are cleaved as a propeptide — c peptide.

This sequence belongs to the insulin family. As to quaternary structure, heterodimer of a B chain and an A chain linked by two disulfide bonds.

It localises to the secreted. Insulin decreases blood glucose concentration. It increases cell permeability to monosaccharides, amino acids and fatty acids. It accelerates glycolysis, the pentose phosphate cycle, and glycogen synthesis in liver. The chain is Insulin-2 (Ins2) from Rattus norvegicus (Rat).